We begin with the raw amino-acid sequence, 118 residues long: uncharacterized protein (118 aa).

The next 4 helical transmembrane spans lie at 5–20 (IVFY…SVVM), 25–42 (VIRT…LLYF), 53–73 (ALAI…FIIL), and 83–103 (LFFT…SLSI).

Its subcellular location is the cell membrane. This is an uncharacterized protein from Bacillus subtilis (strain 168).